The following is a 510-amino-acid chain: Light-independent protochlorophyllide reductase subunit B (510 aa).

Asp36 provides a ligand contact to [4Fe-4S] cluster. Asp297 (proton donor) is an active-site residue. 432–433 lines the substrate pocket; sequence GM.

It belongs to the ChlB/BchB/BchZ family. As to quaternary structure, protochlorophyllide reductase is composed of three subunits; ChlL, ChlN and ChlB. Forms a heterotetramer of two ChlB and two ChlN subunits. Requires [4Fe-4S] cluster as cofactor.

Its subcellular location is the plastid. It is found in the chloroplast. The catalysed reaction is chlorophyllide a + oxidized 2[4Fe-4S]-[ferredoxin] + 2 ADP + 2 phosphate = protochlorophyllide a + reduced 2[4Fe-4S]-[ferredoxin] + 2 ATP + 2 H2O. It participates in porphyrin-containing compound metabolism; chlorophyll biosynthesis (light-independent). Its function is as follows. Component of the dark-operative protochlorophyllide reductase (DPOR) that uses Mg-ATP and reduced ferredoxin to reduce ring D of protochlorophyllide (Pchlide) to form chlorophyllide a (Chlide). This reaction is light-independent. The NB-protein (ChlN-ChlB) is the catalytic component of the complex. The sequence is that of Light-independent protochlorophyllide reductase subunit B from Pinus koraiensis (Korean pine).